The chain runs to 98 residues: NADH-ubiquinone oxidoreductase chain 4L (98 aa).

A run of 3 helical transmembrane segments spans residues 1–21 (MSMV…GLLM), 29–49 (SLLC…VTIL), and 61–81 (IILL…LVMV).

This sequence belongs to the complex I subunit 4L family. As to quaternary structure, core subunit of respiratory chain NADH dehydrogenase (Complex I) which is composed of 45 different subunits.

Its subcellular location is the mitochondrion inner membrane. It carries out the reaction a ubiquinone + NADH + 5 H(+)(in) = a ubiquinol + NAD(+) + 4 H(+)(out). Functionally, core subunit of the mitochondrial membrane respiratory chain NADH dehydrogenase (Complex I) which catalyzes electron transfer from NADH through the respiratory chain, using ubiquinone as an electron acceptor. Part of the enzyme membrane arm which is embedded in the lipid bilayer and involved in proton translocation. This Callorhinus ursinus (Northern fur seal) protein is NADH-ubiquinone oxidoreductase chain 4L (MT-ND4L).